The following is an 89-amino-acid chain: Large ribosomal subunit protein eL34 (89 aa).

Residues 1-22 (MPAPRYKSGSSKKVYRKAPGNS) are disordered.

The protein belongs to the eukaryotic ribosomal protein eL34 family.

The sequence is that of Large ribosomal subunit protein eL34 from Methanococcus maripaludis (strain C7 / ATCC BAA-1331).